Consider the following 601-residue polypeptide: Beta-phellandrene synthase (601 aa).

The N-terminal 35 residues, 1-35 (MSTISIHHVGILRNPLPSKNKRALINNPWSLSLPR), are a transit peptide targeting the chloroplast. Mn(2+)-binding residues include Asp-356 and Asp-360. The DDXXD motif motif lies at 356–360 (DDVYD). Homodimerization stretches follow at residues 362–368 (YGTLDEL) and 434–471 (EAKW…LSIP). Positions 499 and 507 each coordinate Mn(2+).

This sequence belongs to the terpene synthase family. Homodimer. Mn(2+) serves as cofactor. Mg(2+) is required as a cofactor. In terms of tissue distribution, expressed in peltate glandular trichomes. Present at low levels in flowers, leaves and stems.

It localises to the plastid. The protein localises to the chloroplast. The catalysed reaction is (2E)-geranyl diphosphate = beta-phellandrene + diphosphate. The enzyme catalyses (2E)-geranyl diphosphate = (1R,5R)-sabinene + diphosphate. The protein operates within secondary metabolite biosynthesis; terpenoid biosynthesis. Its function is as follows. Involved in the biosynthesis of phenolic monoterpenes natural products. Monoterpene synthase that catalyzes mainly the formation of olefins such as sabinene and beta-phellandrene, and minor amounts of other monoterpenes (e.g. myrcene, gamma-terpinene, alpha-thujene and alpha-pinene) from geranyl diphosphate (GPP). This chain is Beta-phellandrene synthase, found in Origanum vulgare (Wild marjoram).